Consider the following 349-residue polypeptide: Isopentenyl-diphosphate delta-isomerase (349 aa).

6–7 (RK) serves as a coordination point for substrate. FMN-binding positions include 62-64 (AMT), S93, and N122. Q152 serves as a coordination point for substrate. E153 is a binding site for Mg(2+). FMN is bound by residues K184, T214, 258 to 259 (GG), and 280 to 281 (AG).

The protein belongs to the IPP isomerase type 2 family. As to quaternary structure, homooctamer. Dimer of tetramers. FMN is required as a cofactor. The cofactor is NADPH. Requires Mg(2+) as cofactor.

Its subcellular location is the cytoplasm. It catalyses the reaction isopentenyl diphosphate = dimethylallyl diphosphate. In terms of biological role, involved in the biosynthesis of isoprenoids. Catalyzes the 1,3-allylic rearrangement of the homoallylic substrate isopentenyl (IPP) to its allylic isomer, dimethylallyl diphosphate (DMAPP). This is Isopentenyl-diphosphate delta-isomerase from Bacillus cereus (strain AH820).